Reading from the N-terminus, the 860-residue chain is Leucine--tRNA ligase (860 aa).

The short motif at 42–52 is the 'HIGH' region element; that stretch reads PYPSGRLHMGH. The 'KMSKS' region motif lies at 619-623; it reads KMSKS. Lys622 contacts ATP.

Belongs to the class-I aminoacyl-tRNA synthetase family.

The protein localises to the cytoplasm. The catalysed reaction is tRNA(Leu) + L-leucine + ATP = L-leucyl-tRNA(Leu) + AMP + diphosphate. The sequence is that of Leucine--tRNA ligase from Actinobacillus succinogenes (strain ATCC 55618 / DSM 22257 / CCUG 43843 / 130Z).